The chain runs to 385 residues: Probable threonine protease PRSS50 (385 aa).

A signal peptide spans 1–39; it reads MGRWCQTVARGQRPRTSAPSRAGALLLLLLLLRSAGCWG. Positions 93–358 constitute a Peptidase S1 domain; sequence VSEGKVDPYR…YQHWIWDCLN (266 aa). Asn133 carries N-linked (GlcNAc...) asparagine glycosylation. A disulfide bridge connects residues Cys138 and Cys154. Active-site charge relay system residues include His153 and Asp206. 3 disulfides stabilise this stretch: Cys240–Cys316, Cys273–Cys296, and Cys306–Cys334. An N-linked (GlcNAc...) asparagine glycan is attached at Asn279. Residue Thr310 is the Charge relay system of the active site.

Belongs to the peptidase S1 family. In terms of tissue distribution, testis specific. Differentially expressed in some breast cancer tissues.

The protein localises to the endoplasmic reticulum. In terms of biological role, may be involved in proteolysis through its threonine endopeptidase activity. This chain is Probable threonine protease PRSS50 (PRSS50), found in Homo sapiens (Human).